The following is a 265-amino-acid chain: Small ribosomal subunit protein uS2 (265 aa).

Belongs to the universal ribosomal protein uS2 family.

The sequence is that of Small ribosomal subunit protein uS2 from Gluconobacter oxydans (strain 621H) (Gluconobacter suboxydans).